The following is a 474-amino-acid chain: tRNA-2-methylthio-N(6)-dimethylallyladenosine synthase (474 aa).

Positions 3–120 (KKLYIKTFGC…LPQMISTRQI (118 aa)) constitute an MTTase N-terminal domain. The [4Fe-4S] cluster site is built by cysteine 12, cysteine 49, cysteine 83, cysteine 157, cysteine 161, and cysteine 164. The Radical SAM core domain occupies 143-382 (RTEGVTAFVS…ELQAQAISVR (240 aa)). The TRAM domain occupies 381–444 (VRMVGTTQRV…SHTLRGENVR (64 aa)).

The protein belongs to the methylthiotransferase family. MiaB subfamily. As to quaternary structure, monomer. Requires [4Fe-4S] cluster as cofactor.

The protein localises to the cytoplasm. The enzyme catalyses N(6)-dimethylallyladenosine(37) in tRNA + (sulfur carrier)-SH + AH2 + 2 S-adenosyl-L-methionine = 2-methylsulfanyl-N(6)-dimethylallyladenosine(37) in tRNA + (sulfur carrier)-H + 5'-deoxyadenosine + L-methionine + A + S-adenosyl-L-homocysteine + 2 H(+). In terms of biological role, catalyzes the methylthiolation of N6-(dimethylallyl)adenosine (i(6)A), leading to the formation of 2-methylthio-N6-(dimethylallyl)adenosine (ms(2)i(6)A) at position 37 in tRNAs that read codons beginning with uridine. The polypeptide is tRNA-2-methylthio-N(6)-dimethylallyladenosine synthase (Nitrosospira multiformis (strain ATCC 25196 / NCIMB 11849 / C 71)).